A 245-amino-acid polypeptide reads, in one-letter code: Small ribosomal subunit protein uS3 (245 aa).

A KH type-2 domain is found at 39–107 (IRKAIREKLK…EVRVNLVEIR (69 aa)). The segment at 216 to 245 (DKRLETSGQSRARANTNQRGPASGAQAAGA) is disordered. Over residues 221 to 235 (TSGQSRARANTNQRG) the composition is skewed to polar residues.

This sequence belongs to the universal ribosomal protein uS3 family. As to quaternary structure, part of the 30S ribosomal subunit. Forms a tight complex with proteins S10 and S14.

Its function is as follows. Binds the lower part of the 30S subunit head. Binds mRNA in the 70S ribosome, positioning it for translation. The chain is Small ribosomal subunit protein uS3 from Hyphomonas neptunium (strain ATCC 15444).